A 419-amino-acid polypeptide reads, in one-letter code: Transcription termination factor Rho (419 aa).

Positions 48–123 constitute a Rho RNA-BD domain; it reads DIFGDGVLEI…LKVNEVNFDK (76 aa). RNA-binding regions lie at residues 61–66, 78–80, and 108–110; these read GFGFLR, DIY, and ERY. Residues 169–174, 181–186, and Arg212 contribute to the ATP site; these read GRGQRG and KAGKTM. The interval 284 to 288 is RNA-binding 2; it reads VLTGG.

Belongs to the Rho family. As to quaternary structure, homohexamer. The homohexamer assembles into an open ring structure.

Facilitates transcription termination by a mechanism that involves Rho binding to the nascent RNA, activation of Rho's RNA-dependent ATPase activity, and release of the mRNA from the DNA template. In Escherichia coli O157:H7, this protein is Transcription termination factor Rho.